The following is a 459-amino-acid chain: NADP-specific glutamate dehydrogenase (459 aa).

Residue lysine 116 is part of the active site.

It belongs to the Glu/Leu/Phe/Val dehydrogenases family. Homohexamer.

It carries out the reaction L-glutamate + NADP(+) + H2O = 2-oxoglutarate + NH4(+) + NADPH + H(+). This Schwanniomyces occidentalis (Yeast) protein is NADP-specific glutamate dehydrogenase (GDHA).